We begin with the raw amino-acid sequence, 130 residues long: Small ribosomal subunit protein uS9 (130 aa).

It belongs to the universal ribosomal protein uS9 family.

This Bacillus anthracis (strain A0248) protein is Small ribosomal subunit protein uS9.